The following is a 48-amino-acid chain: MNKQRFLFAAKISGIHFLLSLTVAVLLAGLIFFVWYPFPYQKIMGNFK.

The sequence is that of Fimbrial assembly protein, serogroup F1 (fimB) from Dichelobacter nodosus (Bacteroides nodosus).